The following is a 172-amino-acid chain: Xanthine-guanine phosphoribosyltransferase (172 aa).

Residues 47–48 and 106–114 contribute to the 5-phospho-alpha-D-ribose 1-diphosphate site; these read RG and DDLVDTGKT. Asp107 lines the Mg(2+) pocket. 2 residues coordinate guanine: Asp110 and Ile153. Xanthine contacts are provided by Asp110 and Ile153. GMP-binding positions include 110–114 and 152–153; these read DTGKT and WI.

It belongs to the purine/pyrimidine phosphoribosyltransferase family. XGPT subfamily. As to quaternary structure, homotetramer. Requires Mg(2+) as cofactor.

The protein resides in the cell inner membrane. It carries out the reaction GMP + diphosphate = guanine + 5-phospho-alpha-D-ribose 1-diphosphate. It catalyses the reaction XMP + diphosphate = xanthine + 5-phospho-alpha-D-ribose 1-diphosphate. The catalysed reaction is IMP + diphosphate = hypoxanthine + 5-phospho-alpha-D-ribose 1-diphosphate. It participates in purine metabolism; GMP biosynthesis via salvage pathway; GMP from guanine: step 1/1. The protein operates within purine metabolism; XMP biosynthesis via salvage pathway; XMP from xanthine: step 1/1. Its function is as follows. Purine salvage pathway enzyme that catalyzes the transfer of the ribosyl-5-phosphate group from 5-phospho-alpha-D-ribose 1-diphosphate (PRPP) to the N9 position of the 6-oxopurines guanine and xanthine to form the corresponding ribonucleotides GMP (guanosine 5'-monophosphate) and XMP (xanthosine 5'-monophosphate), with the release of PPi. To a lesser extent, also acts on hypoxanthine. The sequence is that of Xanthine-guanine phosphoribosyltransferase from Rhodopseudomonas palustris (strain HaA2).